The primary structure comprises 467 residues: Argininosuccinate lyase (467 aa).

This sequence belongs to the lyase 1 family. Argininosuccinate lyase subfamily.

The protein resides in the cytoplasm. The enzyme catalyses 2-(N(omega)-L-arginino)succinate = fumarate + L-arginine. It functions in the pathway amino-acid biosynthesis; L-arginine biosynthesis; L-arginine from L-ornithine and carbamoyl phosphate: step 3/3. The protein is Argininosuccinate lyase of Rhizobium johnstonii (strain DSM 114642 / LMG 32736 / 3841) (Rhizobium leguminosarum bv. viciae).